The chain runs to 302 residues: Putative S-adenosyl-L-methionine-dependent methyltransferase MAB_4586c (302 aa).

Residues aspartate 122 and 151–152 contribute to the S-adenosyl-L-methionine site; that span reads DL.

Belongs to the UPF0677 family.

Exhibits S-adenosyl-L-methionine-dependent methyltransferase activity. This is Putative S-adenosyl-L-methionine-dependent methyltransferase MAB_4586c from Mycobacteroides abscessus (strain ATCC 19977 / DSM 44196 / CCUG 20993 / CIP 104536 / JCM 13569 / NCTC 13031 / TMC 1543 / L948) (Mycobacterium abscessus).